Reading from the N-terminus, the 157-residue chain is Acetyltransferase PseH (157 aa).

The N-acetyltransferase domain maps to 5-152 (KNFTELNSQE…YHICLKQSDC (148 aa)).

Its function is as follows. Catalyzes the third step in the biosynthesis of pseudaminic acid, a sialic-acid-like sugar that is used to modify flagellin. Mediates N-4 acetylation of UDP-4-amino-4,6-dideoxy-beta-L-AltNAc to form UDP-2,4-diacetamido-2,4,6-trideoxy-beta-L-altropyranose. In Campylobacter jejuni subsp. jejuni serotype O:23/36 (strain 81-176), this protein is Acetyltransferase PseH (pseH).